A 39-amino-acid polypeptide reads, in one-letter code: MTQQSNPNEQTVELNRTSLYWGLLLIFVLAVLFSNYFFN.

A helical transmembrane segment spans residues 18-38 (SLYWGLLLIFVLAVLFSNYFF).

Belongs to the PsbL family. As to quaternary structure, PSII is composed of 1 copy each of membrane proteins PsbA, PsbB, PsbC, PsbD, PsbE, PsbF, PsbH, PsbI, PsbJ, PsbK, PsbL, PsbM, PsbT, PsbX, PsbY, PsbZ, Psb30/Ycf12, at least 3 peripheral proteins of the oxygen-evolving complex and a large number of cofactors. It forms dimeric complexes.

It is found in the plastid thylakoid membrane. Functionally, one of the components of the core complex of photosystem II (PSII). PSII is a light-driven water:plastoquinone oxidoreductase that uses light energy to abstract electrons from H(2)O, generating O(2) and a proton gradient subsequently used for ATP formation. It consists of a core antenna complex that captures photons, and an electron transfer chain that converts photonic excitation into a charge separation. This subunit is found at the monomer-monomer interface and is required for correct PSII assembly and/or dimerization. The polypeptide is Photosystem II reaction center protein L (Cuscuta gronovii (Common dodder)).